The sequence spans 348 residues: Short-wave-sensitive opsin 1 (348 aa).

Residues 1–33 are Extracellular-facing; that stretch reads MRKMSEEEFYLFKNISSVGPWDGPQYHIAPVWA. Asn-14 carries an N-linked (GlcNAc...) asparagine glycan. A helical transmembrane segment spans residues 34 to 58; the sequence is FYLQAAFMGTVFLIGFPLNAMVLVA. Residues 59 to 70 lie on the Cytoplasmic side of the membrane; the sequence is TLRYKKLRQPLN. The chain crosses the membrane as a helical span at residues 71–96; it reads YILVNVSFGGFLLCIFSVFPVFVASC. The Extracellular portion of the chain corresponds to 97–110; that stretch reads NGYFVFGRHVCALE. Cys-107 and Cys-184 are disulfide-bonded. A helical membrane pass occupies residues 111-130; it reads GFLGTVAGLVTGWSLAFLAF. Topologically, residues 131-149 are cytoplasmic; the sequence is ERYIVICKPFGNFRFSSKH. A helical transmembrane segment spans residues 150 to 173; sequence ALTVVLATWTIGIGVSIPPFFGWS. Residues 174–199 are Extracellular-facing; that stretch reads RFIPEGLQCSCGPDWYTVGTKYRSES. Residues 200-227 traverse the membrane as a helical segment; the sequence is YTWFLFIFCFIVPLSLICFSYTQLLRAL. At 228–249 the chain is on the cytoplasmic side; sequence KAVAAQQQESATTQKAEREVSR. Residues 250 to 273 form a helical membrane-spanning segment; sequence MVVVMVGSFCVCYVPYAAFAMYMV. Topologically, residues 274–281 are extracellular; the sequence is NNRNHGLD. Residues 282–306 traverse the membrane as a helical segment; the sequence is LRLVTIPSFFSKSACIYNPIIYCFM. Lys-293 carries the N6-(retinylidene)lysine modification. Residues 307-348 are Cytoplasmic-facing; the sequence is NKQFQACIMKMVCGKAMTDESDTCSSQKTEVSTVSSTQVGPN.

Belongs to the G-protein coupled receptor 1 family. Opsin subfamily. In terms of processing, phosphorylated on some or all of the serine and threonine residues present in the C-terminal region.

The protein resides in the cell membrane. It localises to the photoreceptor inner segment. It is found in the cell projection. Its subcellular location is the cilium. The protein localises to the photoreceptor outer segment. The protein resides in the cytoplasm. It localises to the perinuclear region. Functionally, visual pigments are the light-absorbing molecules that mediate vision. They consist of an apoprotein, opsin, covalently linked to cis-retinal. Required for the maintenance of cone outer segment organization in the ventral retina, but not essential for the maintenance of functioning cone photoreceptors. Involved in ensuring correct abundance and localization of retinal membrane proteins. May increase spectral sensitivity in dim light. This chain is Short-wave-sensitive opsin 1 (OPN1SW), found in Pan paniscus (Pygmy chimpanzee).